The sequence spans 349 residues: S-adenosylmethionine:tRNA ribosyltransferase-isomerase (349 aa).

It belongs to the QueA family. Monomer.

It localises to the cytoplasm. The catalysed reaction is 7-aminomethyl-7-carbaguanosine(34) in tRNA + S-adenosyl-L-methionine = epoxyqueuosine(34) in tRNA + adenine + L-methionine + 2 H(+). The protein operates within tRNA modification; tRNA-queuosine biosynthesis. Its function is as follows. Transfers and isomerizes the ribose moiety from AdoMet to the 7-aminomethyl group of 7-deazaguanine (preQ1-tRNA) to give epoxyqueuosine (oQ-tRNA). This Pseudomonas fluorescens (strain SBW25) protein is S-adenosylmethionine:tRNA ribosyltransferase-isomerase.